A 1340-amino-acid chain; its full sequence is Iron-sulfur cluster assembly protein SufD (1340 aa).

Positions 477 to 487 (NSLKHNNNNTK) are enriched in low complexity. Disordered regions lie at residues 477-498 (NSLK…ERSS), 723-743 (HGKD…NYLN), 765-794 (NVST…QSTV), 835-865 (EKNE…GEKK), and 992-1055 (NIPT…NNIQ). A compositionally biased stretch (basic and acidic residues) spans 723 to 734 (HGKDNTQHDDKN). Polar residues predominate over residues 782-794 (NPDTETNNEQSTV). Residues 1022-1037 (DNLLQNDQATNSNVEI) are compositionally biased toward polar residues.

It belongs to the iron-sulfur cluster assembly SufBD family. Component of a complex composed of SufB, SufC and SufD in a stoichiometric ratio of 1:2:1. Interacts with SufB. Interacts with SufC; the interaction enhances the ATPase activity of SufC.

It is found in the plastid. The protein resides in the apicoplast. It participates in cofactor biosynthesis; iron-sulfur cluster biosynthesis. Its function is as follows. Participates in the sulfur mobilization (SUF) pathway for iron-sulfur (Fe-S) cluster biogenesis. As part of a complex consisting of SufB-SufC(2)-SufD, involved in assembly of [4Fe-4S] clusters. Enhances the ATPase activity of SufC. The sequence is that of Iron-sulfur cluster assembly protein SufD from Plasmodium berghei (strain Anka).